The primary structure comprises 302 residues: UDP-N-acetylenolpyruvoylglucosamine reductase (302 aa).

Residues 27–192 (KTGGPADYVA…VSVTFGLKPG (166 aa)) form the FAD-binding PCMH-type domain. R171 is an active-site residue. Residue S221 is the Proton donor of the active site. E291 is a catalytic residue.

Belongs to the MurB family. It depends on FAD as a cofactor.

It is found in the cytoplasm. It carries out the reaction UDP-N-acetyl-alpha-D-muramate + NADP(+) = UDP-N-acetyl-3-O-(1-carboxyvinyl)-alpha-D-glucosamine + NADPH + H(+). It functions in the pathway cell wall biogenesis; peptidoglycan biosynthesis. Its function is as follows. Cell wall formation. This Lactiplantibacillus plantarum (strain ATCC BAA-793 / NCIMB 8826 / WCFS1) (Lactobacillus plantarum) protein is UDP-N-acetylenolpyruvoylglucosamine reductase.